The primary structure comprises 693 residues: Guanyl-specific ribonuclease pgl-3 (693 aa).

Residues 205-447 are involved in dimerization; it reads KKLMIEGPKI…VNRIIESLEK (243 aa). Residue His437 is the Proton acceptor of the active site. Disordered regions lie at residues 445-468, 523-591, and 620-693; these read LEKSSSSEPSATAKQTTTSNGPTT, AEKN…DATP, and SSNG…RGGS. The segment covering 447–468 has biased composition (low complexity); sequence KSSSSEPSATAKQTTTSNGPTT. Polar residues-rich tracts occupy residues 528 to 548 and 569 to 580; these read NTPSTASPVQFSSDGWDSPTK and ITKVSPQPQERT. The segment at 581–614 is required for interaction with sepa-1; the sequence is GTAWGSGDATPVPLATPVNEYKVSGFGAAPVASG. Gly residues-rich tracts occupy residues 625–634, 641–660, and 668–693; these read SGRGSYGGGR, RGAYGGDRGRGGSGDGSRGY, and RGSYGEGSRGYQGGRAGFFGGSRGGS. The tract at residues 633 to 693 is RNA-binding RGG-box; sequence GRGGDRGGRG…GFFGGSRGGS (61 aa).

As to quaternary structure, may form a homodimer. Interacts with pgl-1 and pgl-2; this association is not required for P-granule localization of either pgl-1 or pgl-2. Interacts with sepa-1; the interaction is enhanced in the presence of RNA. Interacts with prmt-1; the interaction is direct. Post-translationally, methylated at arginine residues in the RNA-binding RGG-box by prmt-1. Methylation promotes P-granule degradation by autophagy. Highly expressed in the germline. Expressed in most somatic cells.

The protein localises to the cytoplasmic granule. The enzyme catalyses [RNA] containing guanosine + H2O = an [RNA fragment]-3'-guanosine-3'-phosphate + a 5'-hydroxy-ribonucleotide-3'-[RNA fragment].. Functionally, guanyl-specific endoribonuclease which cleaves the phosphodiester bond in single-stranded RNA between the 3'-guanylic residue and the 5'-OH residue of adjacent nucleotide, resulting in the formation of a corresponding 2',3'-cyclic phosphate intermediate. P-granule component involved in germline development. Together with the P-granule component pgl-1, is involved in the formation of P-granules. Together with pgl-1, probably recruits other granule components such as pos-1, mex-3 and glh-1, and RNA to P-granules. In vitro, binds mRNA; this interaction is required for the formation of liquid-like droplets that resemble P-granules. Most likely recruits pgl-1 into P-granules during autophagy. Associates with adapters such as sepa-1 and is required for the accumulation and degradation of P-granules by autophagy in somatic cells. This ensures exclusive localization of the P-granules in germ cells. In addition, may act redundantly with pgl-1 to protect germ cells from excessive germline apoptosis during normal oogenesis and development of the two gonadal arms. This may in part be through regulating the localization of sir-2.1 which is involved in germ cell apoptosis. May protect somatic cells from excessive apoptosis during normal development. The chain is Guanyl-specific ribonuclease pgl-3 from Caenorhabditis elegans.